The following is a 504-amino-acid chain: Pyruvate kinase (504 aa).

Position 53 (R53) interacts with substrate. The K(+) site is built by N55, S57, D88, and T89. 55–58 is a binding site for ATP; the sequence is NFSH. ATP is bound by residues R95 and K181. Residue E246 coordinates Mg(2+). 3 residues coordinate substrate: G269, D270, and T302. Residue D270 coordinates Mg(2+).

This sequence belongs to the pyruvate kinase family. Homotetramer. Mg(2+) serves as cofactor. Requires K(+) as cofactor.

Its subcellular location is the cytoplasm. It carries out the reaction pyruvate + ATP = phosphoenolpyruvate + ADP + H(+). The protein operates within carbohydrate degradation; glycolysis; pyruvate from D-glyceraldehyde 3-phosphate: step 5/5. The sequence is that of Pyruvate kinase (CDC19) from Candida albicans (strain SC5314 / ATCC MYA-2876) (Yeast).